Consider the following 755-residue polypeptide: MSTKPSNVVFNIDEEFGITEAIATIDNGDFGKRTIRFETGQLARQADGSVTTYLDDDTMLLATTTASNQPREGFDFFPLTVDVEERMYAAGRIPGSFFRREGRPSTEAILACRLIDRPLRPTFVKGLRNEVQVVITVLSVNPQDMYDVVAINGASAATQLSGLPVSGPVGGVRMALIADDAHPKGQWIAFPTHEQHEQALFELVVAGRIVSKKQGKKTVDDVAIMMVEAGATEQVVDRVKAGAPAPTESVVAEGLEAAKPFIEVLCRAQAGLAERAAKETQEFPLFPPYTDVVYDAVEKKVSKKLRSLLTIKSKQDRDEATNAYMEEIEADLIAQLGSDDEAAASKAIRAAYNAVMKKIVRHMILTEHFRIDGRGVTDIRDLGVEVDLIPRAHGSSLFERGETQILGVTTLDMLKMEQQIDSLTPATSKRYIHHYNFPPYSTGETGRVGSPKRREIGHGALAERALVPVIPSREEFPYAIRQVSEALGSNGSTSMGSVCASTLSLYNAGVPLKAPVAGIAMGLVSDEVDGETRYVALTDILGAEDAFGDMDFKVAGTRQFITALQLDTKLDGIPSEVLAQALSQANDARNTILDTMAEVIETPDEMSDYAPRITAITVPVNKIGEVIGPKGKTINSITEETGANISIEEDGTVYVSAASGAAAEAAIEKINAIANPQLPKVGERFLGTVVKTTAFGAFVSLLPGRDGLVHISKLGGGKRIEKVEDVVNVGDKLEVEILDIDNRGKISLAPVKNED.

Positions 545 and 551 each coordinate Mg(2+). The KH domain occupies 611-670 (PRITAITVPVNKIGEVIGPKGKTINSITEETGANISIEEDGTVYVSAASGAAAEAAIEKI). One can recognise an S1 motif domain in the interval 682 to 751 (GERFLGTVVK…NRGKISLAPV (70 aa)).

This sequence belongs to the polyribonucleotide nucleotidyltransferase family. Mg(2+) serves as cofactor.

Its subcellular location is the cytoplasm. The enzyme catalyses RNA(n+1) + phosphate = RNA(n) + a ribonucleoside 5'-diphosphate. Involved in mRNA degradation. Catalyzes the phosphorolysis of single-stranded polyribonucleotides processively in the 3'- to 5'-direction. The protein is Polyribonucleotide nucleotidyltransferase of Corynebacterium diphtheriae (strain ATCC 700971 / NCTC 13129 / Biotype gravis).